The primary structure comprises 151 residues: Transcription antitermination protein NusB (151 aa).

This sequence belongs to the NusB family.

Involved in transcription antitermination. Required for transcription of ribosomal RNA (rRNA) genes. Binds specifically to the boxA antiterminator sequence of the ribosomal RNA (rrn) operons. This is Transcription antitermination protein NusB from Thermodesulfovibrio yellowstonii (strain ATCC 51303 / DSM 11347 / YP87).